Consider the following 410-residue polypeptide: Cysteine desulfurase IscS (410 aa).

Pyridoxal 5'-phosphate contacts are provided by residues 80 to 81, asparagine 160, glutamine 188, and 208 to 210; these read AT and SGH. Lysine 211 is modified (N6-(pyridoxal phosphate)lysine). Threonine 248 contacts pyridoxal 5'-phosphate. Cysteine 334 functions as the Cysteine persulfide intermediate in the catalytic mechanism. A [2Fe-2S] cluster-binding site is contributed by cysteine 334.

This sequence belongs to the class-V pyridoxal-phosphate-dependent aminotransferase family. NifS/IscS subfamily. In terms of assembly, homodimer. Forms a heterotetramer with IscU, interacts with other sulfur acceptors. Requires pyridoxal 5'-phosphate as cofactor.

It is found in the cytoplasm. The catalysed reaction is (sulfur carrier)-H + L-cysteine = (sulfur carrier)-SH + L-alanine. Its pathway is cofactor biosynthesis; iron-sulfur cluster biosynthesis. Its function is as follows. Master enzyme that delivers sulfur to a number of partners involved in Fe-S cluster assembly, tRNA modification or cofactor biosynthesis. Catalyzes the removal of elemental sulfur atoms from cysteine to produce alanine. Functions as a sulfur delivery protein for Fe-S cluster synthesis onto IscU, an Fe-S scaffold assembly protein, as well as other S acceptor proteins. The chain is Cysteine desulfurase IscS from Rickettsia conorii (strain ATCC VR-613 / Malish 7).